Here is a 351-residue protein sequence, read N- to C-terminus: Peptide chain release factor 1 (351 aa).

Position 229 is an N5-methylglutamine (glutamine 229).

It belongs to the prokaryotic/mitochondrial release factor family. Methylated by PrmC. Methylation increases the termination efficiency of RF1.

It is found in the cytoplasm. Its function is as follows. Peptide chain release factor 1 directs the termination of translation in response to the peptide chain termination codons UAG and UAA. This chain is Peptide chain release factor 1, found in Ruegeria pomeroyi (strain ATCC 700808 / DSM 15171 / DSS-3) (Silicibacter pomeroyi).